The chain runs to 237 residues: Methylthioribulose-1-phosphate dehydratase (237 aa).

A substrate-binding site is contributed by cysteine 98. Zn(2+) is bound by residues histidine 116 and histidine 118. The active-site Proton donor/acceptor is the glutamate 140. Residue histidine 196 participates in Zn(2+) binding.

It belongs to the aldolase class II family. MtnB subfamily. Zn(2+) is required as a cofactor.

The protein localises to the cytoplasm. The enzyme catalyses 5-(methylsulfanyl)-D-ribulose 1-phosphate = 5-methylsulfanyl-2,3-dioxopentyl phosphate + H2O. It participates in amino-acid biosynthesis; L-methionine biosynthesis via salvage pathway; L-methionine from S-methyl-5-thio-alpha-D-ribose 1-phosphate: step 2/6. Catalyzes the dehydration of methylthioribulose-1-phosphate (MTRu-1-P) into 2,3-diketo-5-methylthiopentyl-1-phosphate (DK-MTP-1-P). The chain is Methylthioribulose-1-phosphate dehydratase from Laccaria bicolor (strain S238N-H82 / ATCC MYA-4686) (Bicoloured deceiver).